We begin with the raw amino-acid sequence, 292 residues long: Probable 2-(5''-triphosphoribosyl)-3'-dephosphocoenzyme-A synthase (292 aa).

Belongs to the CitG/MdcB family.

It carries out the reaction 3'-dephospho-CoA + ATP = 2'-(5''-triphospho-alpha-D-ribosyl)-3'-dephospho-CoA + adenine. This chain is Probable 2-(5''-triphosphoribosyl)-3'-dephosphocoenzyme-A synthase, found in Shigella sonnei (strain Ss046).